Consider the following 326-residue polypeptide: Transmembrane protein 171 (326 aa).

4 helical membrane-spanning segments follow: residues 22 to 42 (IFFL…LSIF), 57 to 77 (MMLK…VILA), 114 to 134 (LIFG…GIWV), and 161 to 181 (FLSL…FFVV). The disordered stretch occupies residues 229–326 (FPESSASAAA…LSPSSEPSPP (98 aa)). The segment covering 230-240 (PESSASAAARS) has biased composition (low complexity). The segment covering 257-266 (SIFQSGSPTP) has biased composition (polar residues). 2 stretches are compositionally biased toward low complexity: residues 288–302 (SSSE…LSEL) and 312–326 (ATTT…PSPP).

It localises to the membrane. The protein is Transmembrane protein 171 (TMEM171) of Bos taurus (Bovine).